The chain runs to 515 residues: Tabersonine 6,7-epoxidase isoform 2 (515 aa).

Residues 1–21 (MEFVVSPFAFLIFFFILLKMI) traverse the membrane as a helical segment. Residues Asn173, Asn259, and Asn352 are each glycosylated (N-linked (GlcNAc...) asparagine). A heme-binding site is contributed by Cys449.

This sequence belongs to the cytochrome P450 family. It depends on heme as a cofactor. As to expression, mainly expressed in aerial organs, including stems, leaves and flowers.

Its subcellular location is the endoplasmic reticulum membrane. The enzyme catalyses (-)-tabersonine + reduced [NADPH--hemoprotein reductase] + O2 = lochnericine + oxidized [NADPH--hemoprotein reductase] + H2O + H(+). It participates in alkaloid biosynthesis. In terms of biological role, component of the monoterpenoid indole alkaloids (MIAs, e.g. echitovenine, tabersonine, lochnericine, 19-hydroxytabersonine and horhammericine) biosynthetic pathway; MIAs are used in cancer treatment and other medical applications. Cytochrome P450 catalyzing the conversion of tabersonine to lochnericine. The polypeptide is Tabersonine 6,7-epoxidase isoform 2 (Catharanthus roseus (Madagascar periwinkle)).